We begin with the raw amino-acid sequence, 188 residues long: UPF0398 protein SSP1297 (188 aa).

Belongs to the UPF0398 family.

In Staphylococcus saprophyticus subsp. saprophyticus (strain ATCC 15305 / DSM 20229 / NCIMB 8711 / NCTC 7292 / S-41), this protein is UPF0398 protein SSP1297.